The following is a 79-amino-acid chain: Putative membrane protein insertion efficiency factor (79 aa).

It belongs to the UPF0161 family.

It is found in the cell inner membrane. In terms of biological role, could be involved in insertion of integral membrane proteins into the membrane. This is Putative membrane protein insertion efficiency factor from Synechocystis sp. (strain ATCC 27184 / PCC 6803 / Kazusa).